The chain runs to 467 residues: Protein arginine methyltransferase NDUFAF7 homolog, mitochondrial (467 aa).

It belongs to the NDUFAF7 family.

The protein resides in the mitochondrion. The enzyme catalyses L-arginyl-[protein] + 2 S-adenosyl-L-methionine = N(omega),N(omega)'-dimethyl-L-arginyl-[protein] + 2 S-adenosyl-L-homocysteine + 2 H(+). Its function is as follows. Arginine methyltransferase involved in the assembly or stability of mitochondrial NADH:ubiquinone oxidoreductase complex (complex I). This Schizosaccharomyces pombe (strain 972 / ATCC 24843) (Fission yeast) protein is Protein arginine methyltransferase NDUFAF7 homolog, mitochondrial.